Here is a 270-residue protein sequence, read N- to C-terminus: Putative hydro-lyase Noca_0093 (270 aa).

The protein belongs to the D-glutamate cyclase family.

The protein is Putative hydro-lyase Noca_0093 of Nocardioides sp. (strain ATCC BAA-499 / JS614).